The primary structure comprises 255 residues: Type III pantothenate kinase (255 aa).

6 to 13 contacts ATP; the sequence is DIGNSNID. Substrate is bound at residue 107-110; it reads GADL. The active-site Proton acceptor is Asp109. Position 129 (Asp129) interacts with K(+). Thr132 serves as a coordination point for ATP. Thr183 contributes to the substrate binding site.

Belongs to the type III pantothenate kinase family. As to quaternary structure, homodimer. The cofactor is NH4(+). It depends on K(+) as a cofactor.

It is found in the cytoplasm. It carries out the reaction (R)-pantothenate + ATP = (R)-4'-phosphopantothenate + ADP + H(+). The protein operates within cofactor biosynthesis; coenzyme A biosynthesis; CoA from (R)-pantothenate: step 1/5. Catalyzes the phosphorylation of pantothenate (Pan), the first step in CoA biosynthesis. This is Type III pantothenate kinase from Dictyoglomus turgidum (strain DSM 6724 / Z-1310).